The primary structure comprises 37 residues: Mu-agatoxin-Aa1e (37 aa).

4 cysteine pairs are disulfide-bonded: cysteine 2/cysteine 18, cysteine 9/cysteine 23, cysteine 17/cysteine 33, and cysteine 25/cysteine 31. An Asparagine amide modification is found at asparagine 37.

Belongs to the neurotoxin 07 (Beta/delta-agtx) family. 03 (aga-4) subfamily. Aga sub-subfamily. In terms of tissue distribution, expressed by the venom gland.

Its subcellular location is the secreted. In terms of biological role, insecticidal neurotoxin that induces an irreversible spastic paralysis when injected into insects. Modifies presynaptic voltage-gated sodium channels (Nav), causing them to open at the normal resting potential of the nerve. This leads to spontaneous release of neurotransmitter and repetitive action potentials in motor neurons. The chain is Mu-agatoxin-Aa1e from Agelenopsis aperta (North American funnel-web spider).